Here is a 380-residue protein sequence, read N- to C-terminus: Cytochrome b (380 aa).

The next 4 membrane-spanning stretches (helical) occupy residues phenylalanine 33 to methionine 53, tryptophan 77 to valine 98, tryptophan 113 to leucine 133, and phenylalanine 178 to leucine 198. The heme b site is built by histidine 83 and histidine 97. Heme b contacts are provided by histidine 182 and histidine 196. Histidine 201 is an a ubiquinone binding site. A run of 4 helical transmembrane segments spans residues tyrosine 226 to serine 246, leucine 288 to histidine 308, leucine 320 to glycine 340, and phenylalanine 347 to proline 367.

The protein belongs to the cytochrome b family. The cytochrome bc1 complex contains 3 respiratory subunits (MT-CYB, CYC1 and UQCRFS1), 2 core proteins (UQCRC1 and UQCRC2) and probably 6 low-molecular weight proteins. Heme b is required as a cofactor.

It is found in the mitochondrion inner membrane. Component of the ubiquinol-cytochrome c reductase complex (complex III or cytochrome b-c1 complex) that is part of the mitochondrial respiratory chain. The b-c1 complex mediates electron transfer from ubiquinol to cytochrome c. Contributes to the generation of a proton gradient across the mitochondrial membrane that is then used for ATP synthesis. The sequence is that of Cytochrome b (mt-cyb) from Acipenser transmontanus (White sturgeon).